We begin with the raw amino-acid sequence, 352 residues long: tRNA pseudouridine synthase D (352 aa).

D81 (nucleophile) is an active-site residue. Residues G157–L303 form the TRUD domain.

This sequence belongs to the pseudouridine synthase TruD family.

The enzyme catalyses uridine(13) in tRNA = pseudouridine(13) in tRNA. Functionally, responsible for synthesis of pseudouridine from uracil-13 in transfer RNAs. The chain is tRNA pseudouridine synthase D from Pseudomonas putida (strain W619).